A 131-amino-acid polypeptide reads, in one-letter code: Mesogenin-1 (131 aa).

The tract at residues 22–79 (EDRSFGDSASSPESESFDSACSSPDARSSPTAGCEHAEQQKPKVKMSMRRRMKASERE) is disordered. Over residues 27–45 (GDSASSPESESFDSACSSP) the composition is skewed to low complexity. Positions 63-73 (PKVKMSMRRRM) are enriched in basic residues. Residues 70-124 (RRRMKASEREKLRMRSLAEALHQLRDYLPPGYSRRGQPLTKIQTLKYTIQYIKEL) form the bHLH domain.

Coexpression of ntl and spt is required for expression.

It localises to the nucleus. Its function is as follows. Involved in specifying the paraxial, but not dorsal, mesoderm. May regulate the expression of T-box transcription factors required for mesoderm formation and differentiation. This chain is Mesogenin-1 (msgn1), found in Danio rerio (Zebrafish).